Reading from the N-terminus, the 447-residue chain is Phosphoglucosamine mutase (447 aa).

The active-site Phosphoserine intermediate is Ser104. Positions 104, 243, 245, and 247 each coordinate Mg(2+). Ser104 carries the post-translational modification Phosphoserine.

This sequence belongs to the phosphohexose mutase family. The cofactor is Mg(2+). Post-translationally, activated by phosphorylation.

It carries out the reaction alpha-D-glucosamine 1-phosphate = D-glucosamine 6-phosphate. In terms of biological role, catalyzes the conversion of glucosamine-6-phosphate to glucosamine-1-phosphate. This chain is Phosphoglucosamine mutase, found in Corynebacterium glutamicum (strain ATCC 13032 / DSM 20300 / JCM 1318 / BCRC 11384 / CCUG 27702 / LMG 3730 / NBRC 12168 / NCIMB 10025 / NRRL B-2784 / 534).